The primary structure comprises 208 residues: Guanylate kinase (208 aa).

In terms of domain architecture, Guanylate kinase-like spans 4–185 (GNLYILSAPS…ALADFQAILR (182 aa)). Residue 11–18 (APSGAGKS) coordinates ATP.

Belongs to the guanylate kinase family.

It is found in the cytoplasm. The enzyme catalyses GMP + ATP = GDP + ADP. In terms of biological role, essential for recycling GMP and indirectly, cGMP. This chain is Guanylate kinase (gmk), found in Pasteurella multocida (strain Pm70).